Here is a 100-residue protein sequence, read N- to C-terminus: Urease subunit gamma (100 aa).

This sequence belongs to the urease gamma subunit family. As to quaternary structure, heterotrimer of UreA (gamma), UreB (beta) and UreC (alpha) subunits. Three heterotrimers associate to form the active enzyme.

The protein localises to the cytoplasm. It carries out the reaction urea + 2 H2O + H(+) = hydrogencarbonate + 2 NH4(+). It participates in nitrogen metabolism; urea degradation; CO(2) and NH(3) from urea (urease route): step 1/1. The protein is Urease subunit gamma of Staphylococcus xylosus.